The following is an 85-amino-acid chain: UPF0291 protein SP_1473 (85 aa).

Positions 62–85 (TPEKLRQVQREKGLHGRSLDDPNS) are disordered.

Belongs to the UPF0291 family.

It is found in the cytoplasm. This Streptococcus pneumoniae serotype 4 (strain ATCC BAA-334 / TIGR4) protein is UPF0291 protein SP_1473.